We begin with the raw amino-acid sequence, 1233 residues long: Structural maintenance of chromosomes protein 1A (1233 aa).

32-39 is an ATP binding site; it reads GPNGSGKS. 2 coiled-coil regions span residues 104–124 and 163–503; these read EYKINNKVVQLHEYSEELEKL and ELAQ…KAEI. A compositionally biased stretch (basic and acidic residues) spans 284–293; that stretch reads IKEKDSELNQ. Disordered stretches follow at residues 284-308 and 348-369; these read IKEKDSELNQKRPQYIKAKENTSHK and QEFEERMEEESQSQGRDLTLEE. A phosphoserine mark is found at S358 and S360. The SMC hinge domain occupies 515 to 629; sequence VYGRLIDLCQ…DNVEDARRIA (115 aa). An N6-acetyllysine mark is found at K648 and K713. Positions 667–935 form a coiled coil; it reads DEKAVDKLKE…RHNLLQACKM (269 aa). The tract at residues 947-969 is disordered; that stretch reads MDDISQEEGSSQGEESVSGSQRT. A compositionally biased stretch (low complexity) spans 953–967; it reads EEGSSQGEESVSGSQ. A phosphoserine mark is found at S957, S962, S966, and S970. Residues 988 to 1068 adopt a coiled-coil conformation; it reads EDLKDAQAEE…FEQIKKERFD (81 aa). K1037 carries the post-translational modification N6-acetyllysine.

The protein belongs to the SMC family. SMC1 subfamily. As to quaternary structure, forms a heterodimer with SMC3 in cohesin complexes. Cohesin complexes are composed of the SMC1 (SMC1A or SMC1B) and SMC3 heterodimer attached via their SMC hinge domain, RAD21 which link them, and one STAG protein (STAG1, STAG2 or STAG3), which interacts with RAD21. In germ cell cohesin complexes, SMC1A is mutually exclusive with SMC1B. Interacts with STAG3. Found in a complex with CDCA5, SMC3 and RAD21, PDS5A/SCC-112 and PDS5B/APRIN. Found in a complex containing POLE and SMC3. Interacts with BRCA1, SYCP2, NDC80, RPGR and BRAT1. The cohesin complex interacts with the cohesin loading complex subunits NIPBL/Scc2 (via HEAT repeats) and MAU2/Scc4. NIPBL directly contacts all members of the complex, RAD21, SMC1A/B, SMC3 and STAG1. In terms of processing, phosphorylated upon ionizing radiation or DNA methylation. Phosphorylation of Ser-957 and Ser-966 activates it and is required for S-phase checkpoint activation. Post-translationally, ubiquitinated by the DCX(DCAF15) complex, leading to its degradation. In terms of tissue distribution, ubiquitous (at protein level).

The protein localises to the nucleus. It is found in the chromosome. It localises to the centromere. Its function is as follows. Involved in chromosome cohesion during cell cycle and in DNA repair. Involved in DNA repair via its interaction with BRCA1 and its related phosphorylation by ATM, and works as a downstream effector in the ATM/NBS1 branch of S-phase checkpoint. Central component of cohesin complex. The cohesin complex is required for the cohesion of sister chromatids after DNA replication. The cohesin complex apparently forms a large proteinaceous ring within which sister chromatids can be trapped. At anaphase, the complex is cleaved and dissociates from chromatin, allowing sister chromatids to segregate. The cohesin complex may also play a role in spindle pole assembly during mitosis. Involved in DNA repair via its interaction with BRCA1 and its related phosphorylation by ATM, or via its phosphorylation by ATR. Works as a downstream effector both in the ATM/NBS1 branch and in the ATR/MSH2 branch of S-phase checkpoint. This chain is Structural maintenance of chromosomes protein 1A (Smc1a), found in Mus musculus (Mouse).